Reading from the N-terminus, the 85-residue chain is uncharacterized protein (85 aa).

It belongs to the herpesviridae UL91 family.

This is an uncharacterized protein from Alcelaphine herpesvirus 1 (strain C500) (AlHV-1).